We begin with the raw amino-acid sequence, 546 residues long: MAKDVKFGIDARKQMMDGVNILANAVRVTLGPKGRNVVIDKSFGAPTITKDGVSVAKEIELENKFENMGAQLVREVASRTNDVAGDGTTTATVLAQSILQEGMKSVAAGMNPMDLKRGIDKAVRAAVEQIHLLSTPADDSKAIAQVGSISANSDTKIGELIAQAMEKVGKQGVITVEEGSSFEDTLEVVEGMQFDRGYISPYFANKQDSLTAEFENPYILLVDKKISNIREIVPLLEQVMQQSKPLLIIAEDVENEALATLVVNNMRGGLKTCAVKAPGFGDRRKAMLEDIATLTGGTVISEEIGLSLETATLEQLGTAKKVTVGKENTVIVDGAGHSADIENRVESIRRQVEESTSDYDKEKLQERMAKLAGGVAVIKVGAATETEMKEKKDRVDDALHATRAAVEEGVVPGGGVALVRAMNALSELRGDNDDQNAGINILRRAMEAPLRQIVTNSGEEASVVVNEVKSGSGNYGYNAASGEYGDMLEMGILDPAKVARSALENAASVAGLMLTTEVMITDLPQGDDGMAGMGAGGGMGGMGGMM.

ATP contacts are provided by residues 29–32 (TLGP), Lys50, 86–90 (DGTTT), Gly414, 478–480 (NAA), and Asp494.

This sequence belongs to the chaperonin (HSP60) family. In terms of assembly, forms a cylinder of 14 subunits composed of two heptameric rings stacked back-to-back. Interacts with the co-chaperonin GroES.

Its subcellular location is the cytoplasm. The catalysed reaction is ATP + H2O + a folded polypeptide = ADP + phosphate + an unfolded polypeptide.. Functionally, together with its co-chaperonin GroES, plays an essential role in assisting protein folding. The GroEL-GroES system forms a nano-cage that allows encapsulation of the non-native substrate proteins and provides a physical environment optimized to promote and accelerate protein folding. The protein is Chaperonin GroEL of Psychrobacter arcticus (strain DSM 17307 / VKM B-2377 / 273-4).